A 458-amino-acid polypeptide reads, in one-letter code: MAPNDPKKAVGGGGSGFFASLASSISNLGSAMTKSVNGLVPYEGLEVINPEGSTDDAEEEASRGRWKQEDRDGYWKMMQKYIGSDVTSMVTLPVIIFEPMTMLQKMAELMEYSHLLDMADKTEDPYLRMVYASSWAISVYYAFQRTWKPFNPILGETYEMANYNGVNFISEQVSHHPPMSAGHAENEHFTYDCTSKLKTKFLGNSIDVYPVGRTRVTLKRDGVVLDLVPPLTKVHNLIFGRTWVDSPGEMIMTNQTTGDKVVLYFQPCGWFGSGRYEVDGYVYNASEEPKILMTGKWNESMSYQPCDGEGEPLPGTELKEVWKLADVPKDDKYQYTHFAHKINSFDTAPKKLLPSDSRLRPDRYALEMGDMSKSGYEKSSMEERQRAEKRTREEKGQAFTPKWFDVTEEVTATPWGDLEVYQFNGKYSEHRAAADNSEDNTDPKSIQFNPWQFQDLST.

Disordered regions lie at residues 47–66, 370–401, and 431–458; these read VINP…RGRW, DMSK…AFTP, and RAAA…DLST. Residues 375–396 show a composition bias toward basic and acidic residues; the sequence is GYEKSSMEERQRAEKRTREEKG. Residues 443 to 458 are compositionally biased toward polar residues; that stretch reads PKSIQFNPWQFQDLST.

This sequence belongs to the OSBP family. As to expression, expressed in roots, leaves, stems and flowers.

In terms of biological role, may be involved in the transport of sterols. The chain is Oxysterol-binding protein-related protein 3B (ORP3B) from Arabidopsis thaliana (Mouse-ear cress).